The chain runs to 492 residues: Homoserine O-acetyltransferase (492 aa).

The AB hydrolase-1 domain maps to 47 to 354; that stretch reads NVILVCHALT…NYGHDAFLLE (308 aa). S152 (nucleophile) is an active-site residue. R221 lines the substrate pocket. Catalysis depends on residues D315 and H348. D349 is a substrate binding site. CBS domains are found at residues 375–432 and 436–492; these read MKLD…FTTL and LTKN…HRCT.

It belongs to the AB hydrolase superfamily. MetX family. Homodimer.

The protein localises to the cytoplasm. The enzyme catalyses L-homoserine + acetyl-CoA = O-acetyl-L-homoserine + CoA. It participates in amino-acid biosynthesis; L-methionine biosynthesis via de novo pathway; O-acetyl-L-homoserine from L-homoserine: step 1/1. Functionally, transfers an acetyl group from acetyl-CoA to L-homoserine, forming acetyl-L-homoserine. The protein is Homoserine O-acetyltransferase of Methanosalsum zhilinae (strain DSM 4017 / NBRC 107636 / OCM 62 / WeN5) (Methanohalophilus zhilinae).